The following is a 1708-amino-acid chain: Clathrin heavy chain 2 (1708 aa).

Residues M1 to Y492 form a globular terminal domain region. WD40-like repeat regions lie at residues F25–T67, A68–Q113, V114–A155, N156–E205, A206–Q270, D271–D314, and P315–N343. The interval E462–D478 is binding site for the uncoating ATPase, involved in lattice disassembly. Positions I493–R536 are flexible linker. The interval T537–P648 is distal segment. The heavy chain arm stretch occupies residues T537–Y1708. CHCR repeat units follow at residues Q551–V697, A700–F842, I847–D986, L993–A1138, F1142–A1283, L1288–N1434, and L1437–F1580. The tract at residues V653–Y1708 is proximal segment. The segment at A1227–K1536 is involved in binding clathrin light chain. The interval S1564 to Y1708 is trimerization.

The protein belongs to the clathrin heavy chain family. In terms of assembly, clathrin triskelions, composed of 3 heavy chains and 3 light chains, are the basic subunits of the clathrin coat.

The protein localises to the cytoplasmic vesicle membrane. It is found in the membrane. The protein resides in the coated pit. In terms of biological role, clathrin is the major protein of the polyhedral coat of coated pits and vesicles. The polypeptide is Clathrin heavy chain 2 (Oryza sativa subsp. japonica (Rice)).